We begin with the raw amino-acid sequence, 284 residues long: Nucleotide-binding protein Sbal_3671 (284 aa).

8–15 serves as a coordination point for ATP; sequence GRSGSGKS. 56–59 contacts GTP; it reads DVRN.

Belongs to the RapZ-like family.

Its function is as follows. Displays ATPase and GTPase activities. The protein is Nucleotide-binding protein Sbal_3671 of Shewanella baltica (strain OS155 / ATCC BAA-1091).